A 370-amino-acid polypeptide reads, in one-letter code: DNA replication and repair protein RecF (370 aa).

30-37 contacts ATP; it reads GENAQGKT.

Belongs to the RecF family.

The protein localises to the cytoplasm. Functionally, the RecF protein is involved in DNA metabolism; it is required for DNA replication and normal SOS inducibility. RecF binds preferentially to single-stranded, linear DNA. It also seems to bind ATP. The sequence is that of DNA replication and repair protein RecF from Bacillus velezensis (strain DSM 23117 / BGSC 10A6 / LMG 26770 / FZB42) (Bacillus amyloliquefaciens subsp. plantarum).